The sequence spans 400 residues: Elongation factor Tu 2 (400 aa).

The 200-residue stretch at 10–209 (KPHVNIGTIG…AVDEYIPTPQ (200 aa)) folds into the tr-type G domain. The tract at residues 19 to 26 (GHVDHGKT) is G1. Residue 19–26 (GHVDHGKT) coordinates GTP. Position 26 (threonine 26) interacts with Mg(2+). The G2 stretch occupies residues 60–64 (GITIN). A G3 region spans residues 81-84 (DCPG). Residues 81–85 (DCPGH) and 136–139 (NKAD) each bind GTP. The G4 stretch occupies residues 136–139 (NKAD). The G5 stretch occupies residues 174-176 (SAL).

The protein belongs to the TRAFAC class translation factor GTPase superfamily. Classic translation factor GTPase family. EF-Tu/EF-1A subfamily. As to quaternary structure, monomer.

The protein resides in the cytoplasm. The enzyme catalyses GTP + H2O = GDP + phosphate + H(+). Its function is as follows. GTP hydrolase that promotes the GTP-dependent binding of aminoacyl-tRNA to the A-site of ribosomes during protein biosynthesis. The polypeptide is Elongation factor Tu 2 (Pelotomaculum thermopropionicum (strain DSM 13744 / JCM 10971 / SI)).